The following is a 153-amino-acid chain: Protein E6 (153 aa).

Zinc fingers lie at residues 29-65 (CVWC…CGKC) and 102-138 (CYIC…CMNC).

The protein belongs to the papillomaviridae E6 protein family. In terms of assembly, forms homodimers. Interacts with ubiquitin-protein ligase UBE3A/E6-AP; this interaction stimulates UBE3A ubiquitin activity. Interacts with host TP53 and EP300; this interaction inhibits TP53 activity.

Its subcellular location is the host cytoplasm. It is found in the host nucleus. Plays a major role in the induction and maintenance of cellular transformation. E6 associates with host UBE3A/E6-AP ubiquitin-protein ligase and modulates its activity. Sequesters tumor suppressor TP53 in the host cytoplasm and modulates its activity by interacting with host EP300 that results in the reduction of TP53 acetylation and activation. In turn, apoptosis induced by DNA damage is inhibited. E6 also protects host keratinocytes from apoptosis by mediating the degradation of host BAK1. May also inhibit host immune response. The protein is Protein E6 of Human papillomavirus type 2a.